Consider the following 214-residue polypeptide: Pyridoxine/pyridoxamine 5'-phosphate oxidase (214 aa).

Substrate is bound by residues 8 to 11 and Lys-66; that span reads RINY. Residues 61-66, 76-77, Arg-82, Lys-83, and Gln-105 each bind FMN; these read RIVLIK and FT. Residues Tyr-123, Arg-127, and Ser-131 each contribute to the substrate site. FMN is bound by residues 140 to 141 and Trp-184; that span reads QS. Residue 190-192 coordinates substrate; sequence RLH. Arg-194 is a binding site for FMN.

The protein belongs to the pyridoxamine 5'-phosphate oxidase family. In terms of assembly, homodimer. It depends on FMN as a cofactor.

The catalysed reaction is pyridoxamine 5'-phosphate + O2 + H2O = pyridoxal 5'-phosphate + H2O2 + NH4(+). It catalyses the reaction pyridoxine 5'-phosphate + O2 = pyridoxal 5'-phosphate + H2O2. Its pathway is cofactor metabolism; pyridoxal 5'-phosphate salvage; pyridoxal 5'-phosphate from pyridoxamine 5'-phosphate: step 1/1. The protein operates within cofactor metabolism; pyridoxal 5'-phosphate salvage; pyridoxal 5'-phosphate from pyridoxine 5'-phosphate: step 1/1. In terms of biological role, catalyzes the oxidation of either pyridoxine 5'-phosphate (PNP) or pyridoxamine 5'-phosphate (PMP) into pyridoxal 5'-phosphate (PLP). In Burkholderia lata (strain ATCC 17760 / DSM 23089 / LMG 22485 / NCIMB 9086 / R18194 / 383), this protein is Pyridoxine/pyridoxamine 5'-phosphate oxidase.